Reading from the N-terminus, the 534-residue chain is tRNA uridine(34) acetyltransferase (534 aa).

A radical S-adenosyl-L-methionine (rSAM) region spans residues 70–330; that stretch reads KPVRTISGVA…GEFKPYREEE (261 aa). A Radical SAM core domain is found at 73–344; it reads RTISGVAVVA…ISYAKSIMPK (272 aa). [4Fe-4S] cluster contacts are provided by Cys90, Cys95, and Cys98. An acetyl-CoA-binding site is contributed by Lys150. The cysteines at positions 384 and 389 are disulfide-linked. The region spanning 387–534 is the N-acetyltransferase domain; the sequence is IRCREVGHVY…RVGAYMGKEL (148 aa). Acetyl-CoA is bound by residues 461–464, 485–487, and Tyr518; these read QLHV and YGR.

The protein belongs to the ELP3 family. The cofactor is [4Fe-4S] cluster.

It carries out the reaction uridine(34) in tRNA + acetyl-CoA + S-adenosyl-L-methionine + H2O = 5-(carboxymethyl)uridine(34) in tRNA + 5'-deoxyadenosine + L-methionine + CoA + 2 H(+). Its pathway is tRNA modification. Its function is as follows. tRNA uridine(34) acetyltransferase, which mediates formation of carboxymethyluridine in the wobble base at position 34 in tRNAs. The proposed mechanism is the following: (i) recruits S-adenosyl-L-methionine and cleaves it to generate a 5'-deoxyadenosine radical (5'-dA) in the radical S-adenosyl-L-methionine (rSAM) region, (ii) hydrolyzes acetyl-CoA in the N-acetyltransferase domain and (iii) an acetyl radical is formed by the products of the two domains and (iv) is transferred onto the C5 position of uridine(34) in the bound tRNA molecule. Does not show protein lysine acetyltransferase activity. The protein is tRNA uridine(34) acetyltransferase of Methanocaldococcus infernus (strain DSM 11812 / JCM 15783 / ME).